The following is a 437-amino-acid chain: GTPase Der (437 aa).

EngA-type G domains are found at residues 2-167 and 180-356; these read ATVL…EKKG and IRVA…NSLF. GTP-binding positions include 8–15, 55–59, 118–121, 186–193, 233–237, and 299–302; these read GKSNVGKS, DTCGI, NKSE, GRPNAGKS, DTAGL, and NKID. A KH-like domain is found at 357–437; it reads YRVQTSAVNA…PIFLKFKNRH (81 aa).

The protein belongs to the TRAFAC class TrmE-Era-EngA-EngB-Septin-like GTPase superfamily. EngA (Der) GTPase family. Associates with the 50S ribosomal subunit.

Functionally, GTPase that plays an essential role in the late steps of ribosome biogenesis. The polypeptide is GTPase Der (Thermosipho melanesiensis (strain DSM 12029 / CIP 104789 / BI429)).